An 85-amino-acid chain; its full sequence is MKVTLIAILTCAAVLVLHTTAAEELKTESQLMEVGMPDTELATVDEERLFKCSVSCEIEKESNKDCKKKKCKGGWKCKFNMCVKV.

Positions Met-1 to Ala-22 are cleaved as a signal peptide. The propeptide occupies Glu-23 to Arg-48. 3 disulfide bridges follow: Cys-52/Cys-66, Cys-56/Cys-77, and Cys-71/Cys-82.

It belongs to the neurotoxin 12 (Hwtx-2) family. 02 (Hwtx-2) subfamily. In terms of tissue distribution, expressed by the venom gland.

The protein resides in the secreted. Postsynaptic neurotoxin. This chain is U4-theraphotoxin-Hhn1ad, found in Cyriopagopus hainanus (Chinese bird spider).